Reading from the N-terminus, the 664-residue chain is Prelamin-A/C (664 aa).

N-acetylmethionine is present on Met1. The interval Met1–Thr24 is disordered. The segment at Met1 to Glu33 is head. The interaction with MLIP stretch occupies residues Met1 to Ala130. Thr3 carries the post-translational modification Phosphothreonine. Ser5 is modified (phosphoserine). Thr10 carries the post-translational modification Phosphothreonine. Phosphoserine occurs at positions 12 and 18. Phosphothreonine is present on Thr19. Ser22 carries the post-translational modification Phosphoserine. The region spanning Glu31 to Leu387 is the IF rod domain. Lys32 carries the post-translational modification N6-acetyllysine; alternate. Lys32 carries the post-translational modification N6-succinyllysine; alternate. Lys32 is covalently cross-linked (Glycyl lysine isopeptide (Lys-Gly) (interchain with G-Cter in SUMO2); alternate). Residues Asp34–Val70 are coil 1A. A phosphoserine mark is found at Ser51, Ser66, and Ser71. Residues Ser71 to Ala80 are linker 1. N6-acetyllysine occurs at positions 78 and 97. The coil 1B stretch occupies residues Tyr81–Thr218. A Glycyl lysine isopeptide (Lys-Gly) (interchain with G-Cter in SUMO2) cross-link involves residue Lys97. The residue at position 107 (Ser107) is a Phosphoserine. Residues Lys108, Lys114, Lys123, Lys135, Lys144, and Lys155 each carry the N6-acetyllysine modification. N6-acetyllysine; alternate is present on Lys171. N6-succinyllysine; alternate is present on Lys171. Lys171 participates in a covalent cross-link: Glycyl lysine isopeptide (Lys-Gly) (interchain with G-Cter in SUMO2); alternate. Residues Lys180, Lys201, and Lys208 each carry the N6-acetyllysine modification. A Glycyl lysine isopeptide (Lys-Gly) (interchain with G-Cter in SUMO2); alternate cross-link involves residue Lys201. Lys201 is covalently cross-linked (Glycyl lysine isopeptide (Lys-Gly) (interchain with G-Cter in SUMO); alternate). Residue Lys208 forms a Glycyl lysine isopeptide (Lys-Gly) (interchain with G-Cter in SUMO2) linkage. Ser212 carries the phosphoserine modification. Residues Lys219 and Lys233 each participate in a glycyl lysine isopeptide (Lys-Gly) (interchain with G-Cter in SUMO2) cross-link. Positions Lys219 to Ala242 are linker 2. An N6-acetyllysine mark is found at Lys233, Lys260, Lys265, and Lys270. The segment at Asp243–Glu383 is coil 2. Lys260 participates in a covalent cross-link: Glycyl lysine isopeptide (Lys-Gly) (interchain with G-Cter in SUMO2); alternate. Residue Lys270 forms a Glycyl lysine isopeptide (Lys-Gly) (interchain with G-Cter in SUMO2); alternate linkage. Phosphoserine occurs at positions 277, 282, 301, and 307. Lys311 is covalently cross-linked (Glycyl lysine isopeptide (Lys-Gly) (interchain with G-Cter in SUMO2); alternate). An N6-acetyllysine mark is found at Lys311, Lys316, and Lys341. Residues Lys366 and Lys378 each participate in a glycyl lysine isopeptide (Lys-Gly) (interchain with G-Cter in SUMO2) cross-link. Residues Glu384 to Val442 are disordered. The interval Glu384–Met664 is tail. Ser390, Ser392, Ser395, Ser398, Ser403, Ser404, Ser406, Ser407, and Ser414 each carry phosphoserine. The span at Ser403–Ser414 shows a compositional bias: low complexity. Phosphothreonine is present on Thr416. An N6-acetyllysine modification is found at Lys417. Residues Lys417 and Lys420 each participate in a glycyl lysine isopeptide (Lys-Gly) (interchain with G-Cter in SUMO2) cross-link. A Nuclear localization signal motif is present at residues Lys417–Glu422. A phosphoserine mark is found at Ser423, Ser426, Ser429, and Ser431. In terms of domain architecture, LTD spans Ser428–Arg545. Lys450 participates in a covalent cross-link: Glycyl lysine isopeptide (Lys-Gly) (interchain with G-Cter in SUMO2); alternate. N6-acetyllysine occurs at positions 450 and 457. Ser458 and Ser463 each carry phosphoserine. Glycyl lysine isopeptide (Lys-Gly) (interchain with G-Cter in SUMO2) cross-links involve residues Lys470 and Lys486. Lys486 is modified (N6-acetyllysine). Thr496 and Thr505 each carry phosphothreonine. 2 positions are modified to phosphoserine: Ser533 and Ser546. A Phosphothreonine modification is found at Thr548. A disordered region spans residues Asp555–Ala577. A phosphoserine mark is found at Ser568 and Ser571. Lys597 participates in a covalent cross-link: Glycyl lysine isopeptide (Lys-Gly) (interchain with G-Cter in SUMO2); alternate. Residue Lys597 forms a Glycyl lysine isopeptide (Lys-Gly) (interchain with G-Cter in SUMO1); alternate linkage. The disordered stretch occupies residues Ala598–Val620. Ser612, Ser613, Ser616, and Ser619 each carry phosphoserine. Residues Ser625 and Ser628 are each glycosylated (O-linked (GlcNAc) serine). Ser628, Ser632, and Ser636 each carry phosphoserine. Residues Leu647–Cys661 constitute a propeptide, removed in Lamin-A/C form. A Cysteine methyl ester modification is found at Cys661. The S-farnesyl cysteine moiety is linked to residue Cys661. The propeptide at Ser662–Met664 is removed in Prelamin-A/C form and in Lamin-A/C form.

Belongs to the intermediate filament family. In terms of assembly, homodimer of lamin A and lamin C. Lamin dimers then assemble into dimeric head-to-tail polymers. Ultimately, two head-to-tail polymers assemble laterally into a protofilament with a uniformly shaped rod of 3.5 nm in diameter. Interacts with lamin-associated polypeptides IA, IB and TMPO-alpha, RB1 and with emerin. Interacts with SREBF1, SREBF2, SUN2 and TMEM43. Interacts with TMEM201. Proteolytically processed isoform A interacts with NARF. Interacts with SUN1. Interacts with MLIP. Interacts with DMPK; may regulate nuclear envelope stability. Interacts with SUV39H1; the interaction increases stability of SUV39H1. Interacts with SYNE2. Interacts with ITSN1 isoform 2. Interacts with IFFO1; enables the formation of an interior nucleoskeleton that is recruited to DNA double-strand breaks. As to quaternary structure, interacts with EMD. Interacts (via C-terminus) with LEMD2 (via N-terminus) (in vitro). Post-translationally, proteolytic cleavage of the C-terminal of 18 residues of prelamin-A/C results in the production of lamin-A/C. The prelamin-A/C maturation pathway includes farnesylation of CAAX motif by protein farnesyltransferase (FNTA and FNTB), removal of the last three amino acids (-AAX) by RCE1/FACE2 and/or ZMPSTE24, methylation of the C-terminal cysteine by ICMT and endoproteolytic removal of the last 15 C-terminal amino acids by ZMPSTE24. Proteolytic cleavage requires prior farnesylation and methylation, and absence of these blocks cleavage. In terms of processing, farnesylation of prelamin-A/C facilitates nuclear envelope targeting. Phosphorylation plays a key role in lamin organization, subcellular localization and nuclear envelope disintegration. Phosphorylation by CDK1 at Ser-22 and Ser-392 at the onset of mitosis drives lamin disassembly and nuclear envelope breakdown. Phosphorylation at Ser-22 and Ser-392 during interphase promotes localization to the nucleoplasm and regulates lamina assembly. Phosphorylation at Ser-22, Ser-392 and Ser-628 during interphase causes redistribution between the nucleus and the cytoplasm. Phosphorylation at Ser-22 by CDK1 regulates matrix stiffness. Phosphorylation status of Ser-22 determines its localization between double-strand break (DSB) sites and the nuclear matrix. Phosphorylated by ATR at Ser-282 in response to DNA damage, leading to lamin disassembly and nuclear envelope rupture. Phosphorylation also regulates stability in micronuclei arising from genome instability: phosphorylation at Ser-395 by ATR in response to genome instability and double-stranded DNA breaks primes LMNA for subsequent phosphorylation at Ser-392 by CDK1 and micronuclei envelope rupture. The rupture of micronuclear envelope triggers the cGAS-STING pathway thereby activating the type I interferon response and innate immunity. Post-translationally, acetylation by KAT8 is required for nuclear architecture. In terms of processing, sumoylation is necessary for the localization to the nuclear envelope.

It is found in the nucleus lamina. The protein localises to the nucleus envelope. The protein resides in the nucleus. Its subcellular location is the nucleoplasm. It localises to the nucleus matrix. Functionally, lamins are intermediate filament proteins that assemble into a filamentous meshwork, and which constitute the major components of the nuclear lamina, a fibrous layer on the nucleoplasmic side of the inner nuclear membrane. Lamins provide a framework for the nuclear envelope, bridging the nuclear envelope and chromatin, thereby playing an important role in nuclear assembly, chromatin organization, nuclear membrane and telomere dynamics. Lamin A and C also regulate matrix stiffness by conferring nuclear mechanical properties. The structural integrity of the lamina is strictly controlled by the cell cycle, as seen by the disintegration and formation of the nuclear envelope in prophase and telophase, respectively. Lamin A and C are present in equal amounts in the lamina of mammals. Also invoved in DNA repair: recruited by DNA repair proteins XRCC4 and IFFO1 to the DNA double-strand breaks (DSBs) to prevent chromosome translocation by immobilizing broken DNA ends. Required for normal development of peripheral nervous system and skeletal muscle and for muscle satellite cell proliferation. Required for osteoblastogenesis and bone formation. Also prevents fat infiltration of muscle and bone marrow, helping to maintain the volume and strength of skeletal muscle and bone. Required for cardiac homeostasis. Prelamin-A/C can accelerate smooth muscle cell senescence. It acts to disrupt mitosis and induce DNA damage in vascular smooth muscle cells (VSMCs), leading to mitotic failure, genomic instability, and premature senescence. This Sus scrofa (Pig) protein is Prelamin-A/C (LMNA).